A 573-amino-acid chain; its full sequence is Sterol esterase 1 (573 aa).

At 1-12 the chain is on the cytoplasmic side; sequence MGVSAVLKRARN. An intramembrane segment occupies 13–33; that stretch reads LLATFIVCCFMAVVLVLALAH. Over 34 to 573 the chain is Cytoplasmic; sequence HFINEHRDTR…TELEMVAEKA (540 aa). Serine 315 functions as the Nucleophile in the catalytic mechanism. Residues aspartate 489 and histidine 520 each act as charge relay system in the active site.

It belongs to the AB hydrolase superfamily. In terms of processing, not N-glycosylated.

It localises to the lipid droplet. The protein localises to the membrane. The catalysed reaction is a sterol ester + H2O = a sterol + a fatty acid + H(+). Functionally, mediates the hydrolysis of steryl esters, thereby playing a central role in lipid metabolism. Under heme-deficient conditions, it constitutes the major steryl ester hydrolase, suggesting that it plays a central role in mobilization of steryl esters under anaerobic conditions. This chain is Sterol esterase 1 (YEH1), found in Saccharomyces cerevisiae (strain ATCC 204508 / S288c) (Baker's yeast).